The following is a 341-amino-acid chain: Phosphate acyltransferase (341 aa).

Belongs to the PlsX family. In terms of assembly, homodimer. Probably interacts with PlsY.

It is found in the cytoplasm. It carries out the reaction a fatty acyl-[ACP] + phosphate = an acyl phosphate + holo-[ACP]. Its pathway is lipid metabolism; phospholipid metabolism. Functionally, catalyzes the reversible formation of acyl-phosphate (acyl-PO(4)) from acyl-[acyl-carrier-protein] (acyl-ACP). This enzyme utilizes acyl-ACP as fatty acyl donor, but not acyl-CoA. This chain is Phosphate acyltransferase, found in Pseudoalteromonas atlantica (strain T6c / ATCC BAA-1087).